A 263-amino-acid polypeptide reads, in one-letter code: 4-hydroxy-2-oxo-heptane-1,7-dioate aldolase (263 aa).

Catalysis depends on His45, which acts as the Proton acceptor. Position 147 (Gln147) interacts with substrate. Residue Glu149 coordinates a divalent metal cation. Substrate contacts are provided by Ala174 and Asp175. Asp175 lines the a divalent metal cation pocket.

This sequence belongs to the HpcH/HpaI aldolase family. Homohexamer; trimer of dimers. The cofactor is a divalent metal cation.

The enzyme catalyses 4-hydroxy-2-oxoheptanedioate = succinate semialdehyde + pyruvate. Its pathway is aromatic compound metabolism; 4-hydroxyphenylacetate degradation; pyruvate and succinate semialdehyde from 4-hydroxyphenylacetate: step 7/7. Its function is as follows. Catalyzes the reversible retro-aldol cleavage of 4-hydroxy-2-ketoheptane-1,7-dioate (HKHD) to pyruvate and succinic semialdehyde. This chain is 4-hydroxy-2-oxo-heptane-1,7-dioate aldolase, found in Salmonella enteritidis PT4 (strain P125109).